The following is a 530-amino-acid chain: Inactive ubiquitin carboxyl-terminal hydrolase 17-like protein 4 (530 aa).

The USP domain maps to 80–375 (AGLQNMGNTC…QAYVLFYIQK (296 aa)). The span at 382 to 392 (SESVSRGREPR) shows a compositional bias: basic and acidic residues. 2 disordered regions span residues 382–410 (SESV…ELKR) and 493–530 (NSTD…LVCQ). Polar residues predominate over residues 495 to 510 (TDQESMNTGTLASLQG). A compositionally biased stretch (basic residues) spans 511–524 (RTRRSKGKNKHSKR).

Belongs to the peptidase C19 family. USP17 subfamily.

It is found in the nucleus. The protein localises to the endoplasmic reticulum. This chain is Inactive ubiquitin carboxyl-terminal hydrolase 17-like protein 4 (USP17L4), found in Homo sapiens (Human).